The sequence spans 109 residues: Spermidine export protein MdtI (109 aa).

The next 4 membrane-spanning stretches (helical) occupy residues 6–26 (WIHG…NVLL), 36–56 (CYGI…SQAV), 64–84 (AYAL…WVLF), and 88–108 (LNPK…MIKF).

The protein belongs to the drug/metabolite transporter (DMT) superfamily. Small multidrug resistance (SMR) (TC 2.A.7.1) family. MdtI subfamily. In terms of assembly, forms a complex with MdtJ.

Its subcellular location is the cell inner membrane. In terms of biological role, catalyzes the excretion of spermidine. The polypeptide is Spermidine export protein MdtI (Salmonella choleraesuis (strain SC-B67)).